The following is an 84-amino-acid chain: Tenecin-1 (84 aa).

The signal sequence occupies residues 1 to 19; sequence MKLTIFALVACFFILQIAA. The propeptide occupies 20 to 41; the sequence is FPLEEAATAEEIEQGEHIRVKR. 3 cysteine pairs are disulfide-bonded: C44–C75, C61–C81, and C65–C83.

Belongs to the invertebrate defensin family. Type 1 subfamily.

It localises to the secreted. Functionally, bactericidal protein produced in response to injury. It is cytotoxic to Gram-positive bacteria. In Tenebrio molitor (Yellow mealworm beetle), this protein is Tenecin-1.